We begin with the raw amino-acid sequence, 299 residues long: Meso-diaminopimelate D-dehydrogenase (299 aa).

Residues 11-14 (YGNI), R36, 67-70 (CTPT), 90-92 (SFD), and 119-123 (AGWDP) contribute to the NADP(+) site. Substrate is bound by residues D92, D122, F146, 152–153 (MG), T171, R181, H227, and N253.

This sequence belongs to the diaminopimelate dehydrogenase family. In terms of assembly, homodimer.

It carries out the reaction meso-2,6-diaminopimelate + NADP(+) + H2O = (S)-2-amino-6-oxoheptanedioate + NH4(+) + NADPH + H(+). It participates in amino-acid biosynthesis; L-lysine biosynthesis via DAP pathway; DL-2,6-diaminopimelate from (S)-tetrahydrodipicolinate: step 1/1. Its function is as follows. Catalyzes the reversible NADPH-dependent reductive amination of L-2-amino-6-oxopimelate, the acyclic form of L-tetrahydrodipicolinate, to generate the meso compound, D,L-2,6-diaminopimelate. Probably plays a role in lysine biosynthesis. Exhibits a high substrate specificity for meso-2,6-diaminopimelate (m-DAP), since the activity with L,L-2,6-diaminopimelate is less than 5% of the activity observed with m-DAP. Can use NAD(+) only very poorly since the activity observed in the presence of NAD(+) is about 14% of that with NADP(+). This is Meso-diaminopimelate D-dehydrogenase (ddh) from Bacteroides fragilis (strain ATCC 25285 / DSM 2151 / CCUG 4856 / JCM 11019 / LMG 10263 / NCTC 9343 / Onslow / VPI 2553 / EN-2).